The following is a 323-amino-acid chain: Ubiquinone biosynthesis protein COQ4, mitochondrial (323 aa).

A mitochondrion-targeting transit peptide spans methionine 1–serine 29. 4 residues coordinate Zn(2+): histidine 205, aspartate 206, histidine 209, and glutamate 221.

It belongs to the COQ4 family. Component of a multi-subunit COQ enzyme complex, composed of at least COQ3, COQ4, COQ5, COQ6, COQ7 and COQ9. Zn(2+) is required as a cofactor.

It localises to the mitochondrion inner membrane. It catalyses the reaction a 4-hydroxy-3-methoxy-5-(all-trans-polyprenyl)benzoate + H(+) = a 2-methoxy-6-(all-trans-polyprenyl)phenol + CO2. The protein operates within cofactor biosynthesis; ubiquinone biosynthesis. Its function is as follows. Lyase that catalyzes the C1-decarboxylation of 4-hydroxy-3-methoxy-5-(all-trans-polyprenyl)benzoic acid into 2-methoxy-6-(all-trans-polyprenyl)phenol during ubiquinone biosynthesis. The protein is Ubiquinone biosynthesis protein COQ4, mitochondrial of Candida dubliniensis (strain CD36 / ATCC MYA-646 / CBS 7987 / NCPF 3949 / NRRL Y-17841) (Yeast).